Reading from the N-terminus, the 127-residue chain is uncharacterized protein (127 aa).

The signal sequence occupies residues 1–23 (MAGVRARAPLPLALLLSLPAAPG). Residues 43-127 (CFEVGLRKPP…ACPPRAPLWR (85 aa)) form a disordered region. Positions 59–70 (PPSFSSGSSRPL) are enriched in low complexity.

Its subcellular location is the secreted. This is an uncharacterized protein from Homo sapiens (Human).